Here is a 358-residue protein sequence, read N- to C-terminus: Trace amine-associated receptor 7b (358 aa).

Topologically, residues 1–47 (MATDDDRFPWDQDSILSRDLLSASSMQLCYEKLNRSCVRSPYSPGPR) are extracellular. A glycan (N-linked (GlcNAc...) asparagine) is linked at N34. Cystine bridges form between C37-C201 and C120-C205. Residues 48–68 (LILYAVFGFGAVLAVCGNLLV) form a helical membrane-spanning segment. At 69 to 83 (MTSILHFRQLHSPAN) the chain is on the cytoplasmic side. The helical transmembrane segment at 84 to 104 (FLVASLACADFLVGLTVMPFS) threads the bilayer. Topologically, residues 105 to 125 (MVRSVEGCWYFGDIYCKFHSS) are extracellular. The chain crosses the membrane as a helical span at residues 126 to 147 (FDGSFCYSSIFHLCFISADRYI). The Cytoplasmic portion of the chain corresponds to 148–166 (AVSDPLIYPTRFTASVSGK). Residues 167-187 (CITFSWLLSIIYSFSLFYTGV) form a helical membrane-spanning segment. Residues 188 to 211 (NEAGLEDLVSALTCVGGCQIAVNQ) lie on the Extracellular side of the membrane. N-linked (GlcNAc...) asparagine glycosylation is present at N210. Residues 212 to 232 (SWVFINFLLFLVPALVMMTVY) form a helical membrane-spanning segment. Topologically, residues 233-274 (SKIFLIAKQQAQNIEKMGKQTARASESYKDRVAKRERKAAKT) are cytoplasmic. Residues 275–295 (LGIAVAAFLLSWLPYFIDSII) traverse the membrane as a helical segment. Residues 296–309 (DAFLGFVTPTYVYE) lie on the Extracellular side of the membrane. A helical transmembrane segment spans residues 310–332 (ILVWIGYYNSAMNPLIYAFFYPW). Residues 333-358 (FRKAIKLIVTGKILRENSSATNLFPE) lie on the Cytoplasmic side of the membrane.

Belongs to the G-protein coupled receptor 1 family.

It localises to the cell membrane. Its function is as follows. Olfactory receptor specific for N,N-dimethylalkylamines trace amines, such as N,N-dimethylcyclohexylamine. Trace amine compounds are enriched in animal body fluids and act on trace amine-associated receptors (TAARs) to elicit both intraspecific and interspecific innate behaviors. Ligand-binding causes a conformation change that triggers signaling via G(s)-class of G alpha proteins (GNAL or GNAS). This is Trace amine-associated receptor 7b from Rattus norvegicus (Rat).